The following is a 234-amino-acid chain: uncharacterized protein (234 aa).

LRR repeat units lie at residues 44-63 (LEFLSKINGGLTSISDLPKL), 64-84 (KLRKLELRVSGGLEVLAEKCP), 85-107 (NLTHLYLSGNKIKDLSTIEPLKQ), and 111-134 (LKSLDLFNCEVTNLNDYGENVFKL). The tract at residues 161–234 (EGLDDEEEGE…GEEERGQKRK (74 aa)) is disordered. Residues 163–226 (LDDEEEGEHE…GEEDEEELGE (64 aa)) show a composition bias toward acidic residues.

Belongs to the ANP32 family. Expressed in activated stem cells, such as mobilized CD34+ cells and cord blood CD34+ cells, but not in resting bone marrow CD34+ cells. Expressed in a variety of neoplastic cell lines, mainly in prostatic adenocarcinoma cell lines. Not expressed in normal prostatic tissue.

This is an uncharacterized protein from Homo sapiens (Human).